A 147-amino-acid chain; its full sequence is Hemoglobin subunit epsilon (147 aa).

The Globin domain occupies 3 to 147 (HFTAEEKAAI…VAIALGHKYH (145 aa)). Phosphoserine occurs at positions 14 and 51. Positions 64 and 93 each coordinate heme b.

This sequence belongs to the globin family. In terms of assembly, heterotetramer of two alpha chains and two epsilon chains in early embryonic hemoglobin Gower-2; two zeta chains and two epsilon chains in early embryonic hemoglobin Gower-1. As to expression, red blood cells.

Its function is as follows. The epsilon chain is a beta-type chain of early mammalian embryonic hemoglobin. In Callithrix jacchus (White-tufted-ear marmoset), this protein is Hemoglobin subunit epsilon (HBE1).